The primary structure comprises 461 residues: Protein naked cuticle homolog 2 (461 aa).

A disordered region spans residues 1–106; the sequence is MGKFQSKHAA…DGEKAASREG (106 aa). The N-myristoyl glycine moiety is linked to residue Gly-2. Basic and acidic residues-rich tracts occupy residues 34–73 and 97–106; these read RGAEETDRRAGSGVEHRSRDKQELLNGDPKEGPFWDDKGS and DGEKAASREG. Residues 121 to 186 are interaction with DVL1, DVL2 and DVL3; it reads QCDVSVEEDN…LRVKLTVSPE (66 aa). The EF-hand domain occupies 127–162; it reads EEDNRQEWTFTLYDFDNSGKVTREDMSSLMHTIYEV. Ca(2+)-binding residues include Asp-140, Asp-142, Ser-144, Lys-146, and Asp-151. 5 disordered regions span residues 176 to 205, 263 to 302, 321 to 359, 372 to 414, and 441 to 461; these read TLRVKLTVSPEPSSKKECPLTGQDREPTRG, YTSKFGPGSPPEQARQEHHGRATHIPSRSRSQESDAHAIH, TRALAAQPRIKGQEKQFLRSPKGPGKPLGTPGSGKPGKA, SAQD…GQPT, and HEHHHHHEHHHHHHHHHFHPS. Basic and acidic residues predominate over residues 188–205; that stretch reads SSKKECPLTGQDREPTRG. The interval 307–396 is interaction with TGFA; that stretch reads QVLAEHVIPA…PPQPYGHKRY (90 aa). Residues 341 to 350 are compositionally biased toward low complexity; it reads PKGPGKPLGT. Over residues 380–390 the composition is skewed to pro residues; sequence PQPPPQPPPQP.

The protein belongs to the NKD family. Interacts with RNF25, TGFA (via cytoplasmic domain), and PPP2R3A. Interacts with DVL1, DVL2 and DVL3. Ubiquitinated, leading to rapid proteasomal degradation. Interaction with TGFA interferes with RNF25 binding and protects against ubiquitination mediated by RNF25. In terms of tissue distribution, expressed in the cecum, colon, esophagus, ileum, jejunum, skin and stomach.

The protein resides in the cell membrane. It is found in the cytoplasm. It localises to the cytoplasmic vesicle. Its function is as follows. Cell autonomous antagonist of the canonical Wnt signaling pathway. May activate a second Wnt signaling pathway that controls planar cell polarity. Required for processing of TGFA and for targeting of TGFA to the basolateral membrane of polarized epithelial cells. The protein is Protein naked cuticle homolog 2 (Nkd2) of Mus musculus (Mouse).